The chain runs to 384 residues: Signal peptide peptidase-like 3 (384 aa).

Over 1–8 the chain is Lumenal; sequence MAEQTYSW. The helical transmembrane segment at 9–29 threads the bilayer; that stretch reads AYSLVDSSQVSTFLISILLIV. At 30–73 the chain is on the cytoplasmic side; sequence YGSFRSLNMDFENQDKEKDSNSSSGSFNGNSTNNSIQTIDSTQA. A helical membrane pass occupies residues 74–94; sequence LFLPIGASVSLLVMFFFFDSV. A topological domain (lumenal) is located at residue Q95. Residues 96–116 traverse the membrane as a helical segment; the sequence is VVFTICTAVLATIAFAFLLLP. Residues 117–138 are Cytoplasmic-facing; it reads MCQYLTRPCSPQNKISFGCCGR. The helical transmembrane segment at 139-159 threads the bilayer; sequence FTAAELLSFSLSVMLVLIWVL. Residues 160 to 164 lie on the Lumenal side of the membrane; that stretch reads TGHWL. A helical transmembrane segment spans residues 165–185; it reads LMDALAMGLCVAMIAFVRLPS. Residues 186–190 are Cytoplasmic-facing; it reads LKVSC. Residues 191-211 form a helical membrane-spanning segment; sequence LLLSGLLIYDVFWVFFSAYIF. The active site involves D200. Topologically, residues 212-262 are lumenal; the sequence is NSNVMVKVATQPADNPLDVLSRKLHLGPNVGRDVPRLSLPGKLVFPSSTGS. Residues 263–283 form a helical membrane-spanning segment; the sequence is HFSMLGIGDIVMPGLLLCFVL. Residue D271 is part of the active site. At 284–311 the chain is on the cytoplasmic side; it reads RYDNYKKQASGDSCGAPGPANISGRMQK. A helical transmembrane segment spans residues 312-332; sequence VSYFHCTLIGYFVGLLTATVA. At 333–339 the chain is on the lumenal side; the sequence is SRIHRAA. The helical transmembrane segment at 340 to 360 threads the bilayer; that stretch reads QPALLYLVPFTLLPLLTMAYL. The PAL motif lies at 341–343; it reads PAL. At 361-384 the chain is on the cytoplasmic side; that stretch reads KGDLRRMWSEPFHSKSSSSRFLEV.

This sequence belongs to the peptidase A22B family. Monomer. Homodimer. Interacts with STIM1 (via transmembrane region and SOAR/CAD domain); the interaction promotes the binding of STIM1 to ORAI1. In terms of processing, not glycosylated.

Its subcellular location is the endoplasmic reticulum membrane. It is found in the golgi apparatus. The protein resides in the membrane. Its proteolytic activity is blocked by a signal peptide peptidase (SPP) inhibitor, (ZLL)2-ketone (ZLL) or a gamma-secretase inhibitor, LY411,575. Functionally, intramembrane-cleaving aspartic protease (I-CLiP) that cleaves type II membrane protein substrates in or close to their luminal transmembrane domain boundaries. Acts like a sheddase by mediating the proteolytic release and secretion of active site-containing ectodomains of glycan-modifiying glycosidase and glycosyltransferase enzymes such as MGAT5, B4GAT1 and B4GALT1. Plays a role in the regulation of cellular glycosylation processes. Required to link T-cell antigen receptor (TCR) and calcineurin-NFAT signaling cascades in lymphocytes by promoting the association of STIM1 and ORAI1 during store-operated calcium entry (SOCE) in a protease-independent manner. The polypeptide is Signal peptide peptidase-like 3 (Mus musculus (Mouse)).